A 465-amino-acid chain; its full sequence is Argininosuccinate lyase (465 aa).

It belongs to the lyase 1 family. Argininosuccinate lyase subfamily.

The protein resides in the cytoplasm. The enzyme catalyses 2-(N(omega)-L-arginino)succinate = fumarate + L-arginine. The protein operates within amino-acid biosynthesis; L-arginine biosynthesis; L-arginine from L-ornithine and carbamoyl phosphate: step 3/3. The protein is Argininosuccinate lyase of Deinococcus deserti (strain DSM 17065 / CIP 109153 / LMG 22923 / VCD115).